The chain runs to 120 residues: NAD(P)H-quinone oxidoreductase subunit 3, chloroplastic (120 aa).

The next 3 membrane-spanning stretches (helical) occupy residues I9 to G29, M64 to M84, and V88 to L108.

The protein belongs to the complex I subunit 3 family. As to quaternary structure, NDH is composed of at least 16 different subunits, 5 of which are encoded in the nucleus.

The protein localises to the plastid. The protein resides in the chloroplast thylakoid membrane. The enzyme catalyses a plastoquinone + NADH + (n+1) H(+)(in) = a plastoquinol + NAD(+) + n H(+)(out). It catalyses the reaction a plastoquinone + NADPH + (n+1) H(+)(in) = a plastoquinol + NADP(+) + n H(+)(out). In terms of biological role, NDH shuttles electrons from NAD(P)H:plastoquinone, via FMN and iron-sulfur (Fe-S) centers, to quinones in the photosynthetic chain and possibly in a chloroplast respiratory chain. The immediate electron acceptor for the enzyme in this species is believed to be plastoquinone. Couples the redox reaction to proton translocation, and thus conserves the redox energy in a proton gradient. This chain is NAD(P)H-quinone oxidoreductase subunit 3, chloroplastic, found in Capsella bursa-pastoris (Shepherd's purse).